Consider the following 257-residue polypeptide: Hydroxyacylglutathione hydrolase (257 aa).

His-54, His-56, Asp-58, His-59, His-113, Asp-137, and His-175 together coordinate Zn(2+).

It belongs to the metallo-beta-lactamase superfamily. Glyoxalase II family. In terms of assembly, monomer. It depends on Zn(2+) as a cofactor.

The catalysed reaction is an S-(2-hydroxyacyl)glutathione + H2O = a 2-hydroxy carboxylate + glutathione + H(+). It functions in the pathway secondary metabolite metabolism; methylglyoxal degradation; (R)-lactate from methylglyoxal: step 2/2. Thiolesterase that catalyzes the hydrolysis of S-D-lactoyl-glutathione to form glutathione and D-lactic acid. The protein is Hydroxyacylglutathione hydrolase of Trichormus variabilis (strain ATCC 29413 / PCC 7937) (Anabaena variabilis).